Consider the following 253-residue polypeptide: DNA repair protein RecO (253 aa).

The protein belongs to the RecO family.

Its function is as follows. Involved in DNA repair and RecF pathway recombination. The chain is DNA repair protein RecO from Streptococcus agalactiae serotype III (strain NEM316).